Reading from the N-terminus, the 132-residue chain is MGDYIVVLEAPIIVKDVESVEEAIEAAVNKVMTALEKEKLDFVRVELGYSKCPVCGAHFESAFVVGNIGLVGIYLTLKVFNAQSLEHAERIAKAVVGKALKKVPLKLFEIRELHDGREENNGIEAGENETNA.

This sequence belongs to the UPF0212 family.

This is UPF0212 protein PYRAB08340 from Pyrococcus abyssi (strain GE5 / Orsay).